The following is a 359-amino-acid chain: Molybdenum import ATP-binding protein ModC (359 aa).

The 233-residue stretch at 1–233 folds into the ABC transporter domain; it reads MSGLTVSIRG…IDAESEGGGV (233 aa). 32–39 lines the ATP pocket; the sequence is GHSGAGKT. The region spanning 289-355 is the Mop domain; it reads AISIRNLLPV…VKAVSVDRAA (67 aa).

Belongs to the ABC transporter superfamily. Molybdate importer (TC 3.A.1.8) family. As to quaternary structure, the complex is composed of two ATP-binding proteins (ModC), two transmembrane proteins (ModB) and a solute-binding protein (ModA).

It localises to the cell inner membrane. The enzyme catalyses molybdate(out) + ATP + H2O = molybdate(in) + ADP + phosphate + H(+). In terms of biological role, part of the ABC transporter complex ModABC involved in molybdenum import. Responsible for energy coupling to the transport system. This Brucella suis biovar 1 (strain 1330) protein is Molybdenum import ATP-binding protein ModC.